Reading from the N-terminus, the 285-residue chain is ATP phosphoribosyltransferase (285 aa).

This sequence belongs to the ATP phosphoribosyltransferase family. Long subfamily. It depends on Mg(2+) as a cofactor.

Its subcellular location is the cytoplasm. The catalysed reaction is 1-(5-phospho-beta-D-ribosyl)-ATP + diphosphate = 5-phospho-alpha-D-ribose 1-diphosphate + ATP. It participates in amino-acid biosynthesis; L-histidine biosynthesis; L-histidine from 5-phospho-alpha-D-ribose 1-diphosphate: step 1/9. With respect to regulation, feedback inhibited by histidine. In terms of biological role, catalyzes the condensation of ATP and 5-phosphoribose 1-diphosphate to form N'-(5'-phosphoribosyl)-ATP (PR-ATP). Has a crucial role in the pathway because the rate of histidine biosynthesis seems to be controlled primarily by regulation of HisG enzymatic activity. This is ATP phosphoribosyltransferase from Methanocella arvoryzae (strain DSM 22066 / NBRC 105507 / MRE50).